A 126-amino-acid chain; its full sequence is Holo-[acyl-carrier-protein] synthase (126 aa).

Mg(2+) contacts are provided by aspartate 9 and glutamate 58.

It belongs to the P-Pant transferase superfamily. AcpS family. Requires Mg(2+) as cofactor.

The protein localises to the cytoplasm. It catalyses the reaction apo-[ACP] + CoA = holo-[ACP] + adenosine 3',5'-bisphosphate + H(+). Functionally, transfers the 4'-phosphopantetheine moiety from coenzyme A to a Ser of acyl-carrier-protein. This chain is Holo-[acyl-carrier-protein] synthase, found in Vibrio vulnificus (strain CMCP6).